A 178-amino-acid chain; its full sequence is ATP synthase subunit delta (178 aa).

This sequence belongs to the ATPase delta chain family. F-type ATPases have 2 components, F(1) - the catalytic core - and F(0) - the membrane proton channel. F(1) has five subunits: alpha(3), beta(3), gamma(1), delta(1), epsilon(1). F(0) has three main subunits: a(1), b(2) and c(10-14). The alpha and beta chains form an alternating ring which encloses part of the gamma chain. F(1) is attached to F(0) by a central stalk formed by the gamma and epsilon chains, while a peripheral stalk is formed by the delta and b chains.

It is found in the cell membrane. F(1)F(0) ATP synthase produces ATP from ADP in the presence of a proton or sodium gradient. F-type ATPases consist of two structural domains, F(1) containing the extramembraneous catalytic core and F(0) containing the membrane proton channel, linked together by a central stalk and a peripheral stalk. During catalysis, ATP synthesis in the catalytic domain of F(1) is coupled via a rotary mechanism of the central stalk subunits to proton translocation. Functionally, this protein is part of the stalk that links CF(0) to CF(1). It either transmits conformational changes from CF(0) to CF(1) or is implicated in proton conduction. In Streptococcus pyogenes serotype M1, this protein is ATP synthase subunit delta.